The chain runs to 390 residues: Succinyl-diaminopimelate desuccinylase (390 aa).

His-75 lines the Zn(2+) pocket. Residue Asp-77 is part of the active site. Asp-108 contacts Zn(2+). Glu-141 (proton acceptor) is an active-site residue. Zn(2+) is bound by residues Glu-142, Glu-170, and His-359.

Belongs to the peptidase M20A family. DapE subfamily. Homodimer. It depends on Zn(2+) as a cofactor. Co(2+) is required as a cofactor.

It carries out the reaction N-succinyl-(2S,6S)-2,6-diaminopimelate + H2O = (2S,6S)-2,6-diaminopimelate + succinate. Its pathway is amino-acid biosynthesis; L-lysine biosynthesis via DAP pathway; LL-2,6-diaminopimelate from (S)-tetrahydrodipicolinate (succinylase route): step 3/3. Catalyzes the hydrolysis of N-succinyl-L,L-diaminopimelic acid (SDAP), forming succinate and LL-2,6-diaminopimelate (DAP), an intermediate involved in the bacterial biosynthesis of lysine and meso-diaminopimelic acid, an essential component of bacterial cell walls. In Maricaulis maris (strain MCS10) (Caulobacter maris), this protein is Succinyl-diaminopimelate desuccinylase.